Here is a 425-residue protein sequence, read N- to C-terminus: Cytokine receptor-like factor 1 (425 aa).

The signal sequence occupies residues 1–33 (MPAGRPGPVAQSARRPPRPLSSLWSPLLLCVLG). Residues 35–134 (PRGGSGAHTA…SILAGSCLYV (100 aa)) form the Ig-like C2-type domain. N-linked (GlcNAc...) asparagine glycans are attached at residues Asn95, Asn107, and Asn143. 2 Fibronectin type-III domains span residues 140-235 (KPFN…VLDV) and 240-344 (PPPD…TPRS). An intrachain disulfide couples Cys146 to Cys156. Asn171 is a glycosylation site (N-linked (GlcNAc...) asparagine). The cysteines at positions 187 and 198 are disulfide-linked. The residue at position 222 (Ser222) is a Phosphoserine. N-linked (GlcNAc...) asparagine glycosylation is present at Asn295. The WSXWS motif motif lies at 330 to 334 (WSEWS). The disordered stretch occupies residues 335–366 (HPTAASTPRSERPGPGGGVCEPRGGEPSSGPV). Asn385 carries an N-linked (GlcNAc...) asparagine glycan. Residues 402-425 (HKTRNQDEGILPSGRRGAARGPAG) are disordered. Low complexity predominate over residues 415-425 (GRRGAARGPAG).

This sequence belongs to the type I cytokine receptor family. Type 3 subfamily. In terms of assembly, forms covalent di- and tetramers. Forms a heteromeric complex with cardiotrophin-like cytokine CLCF1/CLC; the CRLF1-CLCF1 complex is a ligand for the ciliary neurotrophic factor receptor/CNTFR. The CRLF1-CLCF1 heterodimer, as well as tripartite signaling complex formed by CRLF1, CLCF1 and CNTFR bind SORL1 (via N-terminal ectodomain); within this complex, the interaction is mediated predominantly by the CRLF1 moiety. In terms of tissue distribution, widely expressed in the embryo. Not detected in the brain of adult mice.

The protein localises to the secreted. Functionally, in complex with CLCF1, forms a heterodimeric neurotropic cytokine that plays a crucial role during neuronal development. Plays a role in the initiation and/or maintenance of suckling in neonatal mice. May also play a regulatory role in the immune system. In Mus musculus (Mouse), this protein is Cytokine receptor-like factor 1 (Crlf1).